The primary structure comprises 318 residues: NADH-ubiquinone oxidoreductase chain 1 (318 aa).

Transmembrane regions (helical) follow at residues 2–22 (FMINVLLLIVPILLAVAFLTL), 70–90 (MFIIAPILALTLALTMWIPLP), 100–120 (LGILFMLAMSSLAVYSILWSG), 147–167 (AIILLSVLLMSGSFTLSTLII), 171–191 (YLWLIFPSWPLAMMWFISTLA), 217–237 (AGPFALFFLAEYANIIMMNIF), 253–273 (ELYSINFTIKALLLTCSFLWI), and 294–314 (LPLTLALCMWHVSLPIMLSSI).

This sequence belongs to the complex I subunit 1 family. As to quaternary structure, core subunit of respiratory chain NADH dehydrogenase (Complex I) which is composed of 45 different subunits.

Its subcellular location is the mitochondrion inner membrane. It carries out the reaction a ubiquinone + NADH + 5 H(+)(in) = a ubiquinol + NAD(+) + 4 H(+)(out). Its function is as follows. Core subunit of the mitochondrial membrane respiratory chain NADH dehydrogenase (Complex I) which catalyzes electron transfer from NADH through the respiratory chain, using ubiquinone as an electron acceptor. Essential for the catalytic activity and assembly of complex I. This chain is NADH-ubiquinone oxidoreductase chain 1 (MT-ND1), found in Equus caballus (Horse).